A 266-amino-acid polypeptide reads, in one-letter code: Apolipoprotein A-I (266 aa).

Positions 1 to 18 (MKAVVLTLAVLFLTGSQA) are cleaved as a signal peptide. A run of 2 repeats spans residues 67 to 88 (LKLL…EQIG) and 89 to 110 (PVTQ…QEMN). The segment at 67-266 (LKLLDNWDSL…DEATKKLNAQ (200 aa)) is 10 X approximate tandem repeats. Methionine 109 is subject to Methionine sulfoxide. The stretch at 111 to 121 (KDLEEVKKKVQ) is one 3; half-length repeat. 5 tandem repeats follow at residues 122–143 (PYLD…QKVA), 144–165 (PLGA…EKLS), 166–187 (PLGE…AQLA), 188–209 (PYSE…EGGG), and 210–231 (ATLT…EKAK). The stretch at 232-242 (PALEDLRQGLM) is one 9; half-length repeat. Residues 243–266 (PVLESFRASLLAAVDEATKKLNAQ) form repeat 10.

The protein belongs to the apolipoprotein A1/A4/E family. In terms of assembly, homodimer. Interacts with APOA1BP and CLU. Component of a sperm activating protein complex (SPAP), consisting of APOA1, an immunoglobulin heavy chain, an immunoglobulin light chain and albumin. Interacts with NDRG1. Interacts with SCGB3A2. Interacts with NAXE and YJEFN3. Post-translationally, glycosylated. Palmitoylated. In terms of processing, phosphorylation sites are present in the extracellular medium.

The protein resides in the secreted. Functionally, participates in the reverse transport of cholesterol from tissues to the liver for excretion by promoting cholesterol efflux from tissues and by acting as a cofactor for the lecithin cholesterol acyltransferase (LCAT). As part of the SPAP complex, activates spermatozoa motility. The sequence is that of Apolipoprotein A-I (APOA1) from Phoca vitulina (Harbor seal).